Here is a 152-residue protein sequence, read N- to C-terminus: Nucleoside diphosphate kinase (152 aa).

ATP-binding residues include Lys11, Phe59, Arg87, Thr93, Arg104, and Asn114. His117 acts as the Pros-phosphohistidine intermediate in catalysis.

Belongs to the NDK family. As to quaternary structure, homotetramer. Requires Mg(2+) as cofactor.

It is found in the cytoplasm. The catalysed reaction is a 2'-deoxyribonucleoside 5'-diphosphate + ATP = a 2'-deoxyribonucleoside 5'-triphosphate + ADP. It carries out the reaction a ribonucleoside 5'-diphosphate + ATP = a ribonucleoside 5'-triphosphate + ADP. Major role in the synthesis of nucleoside triphosphates other than ATP. The ATP gamma phosphate is transferred to the NDP beta phosphate via a ping-pong mechanism, using a phosphorylated active-site intermediate. This is Nucleoside diphosphate kinase from Prochlorococcus marinus (strain MIT 9303).